A 77-amino-acid polypeptide reads, in one-letter code: Acyl carrier protein (77 aa).

One can recognise a Carrier domain in the interval 1–77; it reads MSVEAKVKKI…DAIEYIRKKS (77 aa). Serine 37 carries the post-translational modification O-(pantetheine 4'-phosphoryl)serine.

It belongs to the acyl carrier protein (ACP) family. Post-translationally, 4'-phosphopantetheine is transferred from CoA to a specific serine of apo-ACP by AcpS. This modification is essential for activity because fatty acids are bound in thioester linkage to the sulfhydryl of the prosthetic group.

Its subcellular location is the cytoplasm. Its pathway is lipid metabolism; fatty acid biosynthesis. Carrier of the growing fatty acid chain in fatty acid biosynthesis. The protein is Acyl carrier protein of Desulforapulum autotrophicum (strain ATCC 43914 / DSM 3382 / VKM B-1955 / HRM2) (Desulfobacterium autotrophicum).